A 425-amino-acid polypeptide reads, in one-letter code: Serine--tRNA ligase (425 aa).

230-232 (TAE) lines the L-serine pocket. 261–263 (RAE) is a binding site for ATP. Glutamate 284 contacts L-serine. 348-351 (EISS) contacts ATP. Serine 384 contacts L-serine.

The protein belongs to the class-II aminoacyl-tRNA synthetase family. Type-1 seryl-tRNA synthetase subfamily. As to quaternary structure, homodimer. The tRNA molecule binds across the dimer.

Its subcellular location is the cytoplasm. It carries out the reaction tRNA(Ser) + L-serine + ATP = L-seryl-tRNA(Ser) + AMP + diphosphate + H(+). The enzyme catalyses tRNA(Sec) + L-serine + ATP = L-seryl-tRNA(Sec) + AMP + diphosphate + H(+). It functions in the pathway aminoacyl-tRNA biosynthesis; selenocysteinyl-tRNA(Sec) biosynthesis; L-seryl-tRNA(Sec) from L-serine and tRNA(Sec): step 1/1. Its function is as follows. Catalyzes the attachment of serine to tRNA(Ser). Is also able to aminoacylate tRNA(Sec) with serine, to form the misacylated tRNA L-seryl-tRNA(Sec), which will be further converted into selenocysteinyl-tRNA(Sec). In Desulforudis audaxviator (strain MP104C), this protein is Serine--tRNA ligase.